The primary structure comprises 506 residues: Protein MGF 505-4R (506 aa).

This sequence belongs to the asfivirus MGF 505 family.

Functionally, plays a role in virus cell tropism, and may be required for efficient virus replication in macrophages. The protein is Protein MGF 505-4R of Ornithodoros (relapsing fever ticks).